The chain runs to 260 residues: Indole-3-glycerol phosphate synthase (260 aa).

It belongs to the TrpC family.

The enzyme catalyses 1-(2-carboxyphenylamino)-1-deoxy-D-ribulose 5-phosphate + H(+) = (1S,2R)-1-C-(indol-3-yl)glycerol 3-phosphate + CO2 + H2O. It functions in the pathway amino-acid biosynthesis; L-tryptophan biosynthesis; L-tryptophan from chorismate: step 4/5. The sequence is that of Indole-3-glycerol phosphate synthase from Staphylococcus haemolyticus (strain JCSC1435).